Here is a 364-residue protein sequence, read N- to C-terminus: Anhydro-N-acetylmuramic acid kinase (364 aa).

11–18 (GSSLDGID) contributes to the ATP binding site.

The protein belongs to the anhydro-N-acetylmuramic acid kinase family.

The catalysed reaction is 1,6-anhydro-N-acetyl-beta-muramate + ATP + H2O = N-acetyl-D-muramate 6-phosphate + ADP + H(+). Its pathway is amino-sugar metabolism; 1,6-anhydro-N-acetylmuramate degradation. It functions in the pathway cell wall biogenesis; peptidoglycan recycling. Functionally, catalyzes the specific phosphorylation of 1,6-anhydro-N-acetylmuramic acid (anhMurNAc) with the simultaneous cleavage of the 1,6-anhydro ring, generating MurNAc-6-P. Is required for the utilization of anhMurNAc either imported from the medium or derived from its own cell wall murein, and thus plays a role in cell wall recycling. This chain is Anhydro-N-acetylmuramic acid kinase, found in Pseudomonas syringae pv. syringae (strain B728a).